We begin with the raw amino-acid sequence, 244 residues long: Biosynthetic peptidoglycan transglycosylase (244 aa).

Residues 23–43 (LVVIGAWLAGILLFSFLPVPF) traverse the membrane as a helical segment.

The protein belongs to the glycosyltransferase 51 family.

It localises to the cell inner membrane. The catalysed reaction is [GlcNAc-(1-&gt;4)-Mur2Ac(oyl-L-Ala-gamma-D-Glu-L-Lys-D-Ala-D-Ala)](n)-di-trans,octa-cis-undecaprenyl diphosphate + beta-D-GlcNAc-(1-&gt;4)-Mur2Ac(oyl-L-Ala-gamma-D-Glu-L-Lys-D-Ala-D-Ala)-di-trans,octa-cis-undecaprenyl diphosphate = [GlcNAc-(1-&gt;4)-Mur2Ac(oyl-L-Ala-gamma-D-Glu-L-Lys-D-Ala-D-Ala)](n+1)-di-trans,octa-cis-undecaprenyl diphosphate + di-trans,octa-cis-undecaprenyl diphosphate + H(+). It participates in cell wall biogenesis; peptidoglycan biosynthesis. Functionally, peptidoglycan polymerase that catalyzes glycan chain elongation from lipid-linked precursors. The sequence is that of Biosynthetic peptidoglycan transglycosylase from Pectobacterium carotovorum subsp. carotovorum (strain PC1).